The sequence spans 518 residues: Probable triacylglyceride transporter BCG_1471c (518 aa).

Helical transmembrane passes span 7–27 (VAIS…YVVV), 46–66 (RITW…PLLG), 76–96 (LMLQ…ALAG), 110–130 (IQGV…ADLW), 144–164 (AAQE…VWLL), 170–190 (VFWI…FSLP), 201–221 (VDLV…IGLY), 230–250 (VLPD…VAFF), 270–290 (PFLS…VTLV), 308–328 (AGML…GGWI), 337–357 (VAFA…HWPV), 379–401 (LVVA…LRVV), 408–428 (IASA…VAAL), and 475–495 (IFTI…LISG).

This sequence belongs to the major facilitator superfamily.

It localises to the cell inner membrane. Its activity is regulated as follows. Inhibited by CCCP and valinomycin. In association with lipoprotein LprG probably transports triacylglycerides (TAG) across the inner cell membrane into the periplasm; TAG probably regulates lipid metabolism and growth regulation. Confers resistance to several drugs such as rifampicin, clofazimine and novobiocin; is also part of the oxidative stress response and is needed to maintain normal growth characteristics. Probably an efflux transporter, involved in maintaining correct cell wall permeability. Probably required with LprG for normal surface localization of lipoarabinomannan (LAM). Required for optimal growth on cholesterol. This chain is Probable triacylglyceride transporter BCG_1471c, found in Mycobacterium bovis (strain BCG / Pasteur 1173P2).